Consider the following 392-residue polypeptide: Pannexin-3 (392 aa).

The Cytoplasmic portion of the chain corresponds to 1–39; sequence MSLAHTAAEYMLSDALLPDRRGPRLKGLRLELPLDRIVK. A helical membrane pass occupies residues 40 to 60; sequence FVAVGSPLLLMSLAFAQEFSS. The Extracellular segment spans residues 61–113; it reads GSPISCFSPSNFSIRQAAYVDSSCWDSLLHHKQDGPGQDKMKSLWPHKALPYS. N71 carries an N-linked (GlcNAc...) asparagine glycan. The helical transmembrane segment at 114 to 134 threads the bilayer; it reads LLALALLMYLPVLLWQYAAVP. Residues 135-215 are Cytoplasmic-facing; that stretch reads ALSSDLLFII…VATYLLRNSL (81 aa). Residues 216–236 traverse the membrane as a helical segment; sequence LLIFTSATYLYLGHFHLDVFF. At 237–267 the chain is on the extracellular side; that stretch reads QEEFSCSIKTGLLSDETHVPNLITCRLTSLS. The chain crosses the membrane as a helical span at residues 268–288; it reads IFQIVSLSSVAIYTILVPVII. The Cytoplasmic portion of the chain corresponds to 289 to 392; that stretch reads YNLTRLCRWD…LTNSACDEHP (104 aa).

This sequence belongs to the pannexin family. As to quaternary structure, homoheptameric.

The protein resides in the cell membrane. It localises to the cell junction. Its subcellular location is the gap junction. The protein localises to the endoplasmic reticulum membrane. It carries out the reaction Ca(2+)(in) = Ca(2+)(out). The enzyme catalyses ATP(in) = ATP(out). Functionally, regulator of osteoblast differentiation by functionning as a Ca(2+) channel in the endoplasmic reticulum which regulates calmodulin (CaM) pathways. Allows ATP release into the extracellular space and activation or purinergic receptors. This is Pannexin-3 from Homo sapiens (Human).